Reading from the N-terminus, the 318-residue chain is Glutathione synthetase (318 aa).

Positions 124 to 310 (EKLFTAWFPE…ITGKLMDAIE (187 aa)) constitute an ATP-grasp domain. Position 150–207 (150–207 (FREQHGDVILKPLDGMGGASIFRVKEGDPNLSVIIETLTNHGQNYCMAQTFVPDISNG)) interacts with ATP. Mg(2+) contacts are provided by Glu-281 and Asn-283.

Belongs to the prokaryotic GSH synthase family. It depends on Mg(2+) as a cofactor. The cofactor is Mn(2+).

The catalysed reaction is gamma-L-glutamyl-L-cysteine + glycine + ATP = glutathione + ADP + phosphate + H(+). It participates in sulfur metabolism; glutathione biosynthesis; glutathione from L-cysteine and L-glutamate: step 2/2. This Vibrio cholerae serotype O1 (strain ATCC 39315 / El Tor Inaba N16961) protein is Glutathione synthetase.